Reading from the N-terminus, the 179-residue chain is uncharacterized protein (179 aa).

A compositionally biased stretch (low complexity) spans 26 to 39; sequence AAKLAAATTPTHTA. Residues 26–179 are disordered; the sequence is AAKLAAATTP…RPRRNTLRHM (154 aa). Residues 150 to 165 show a composition bias toward polar residues; the sequence is RQSVTQSTAARQTQPH. A compositionally biased stretch (basic residues) spans 167-179; that stretch reads GRPRPRRNTLRHM.

This is an uncharacterized protein from Equus caballus (Horse).